Here is a 417-residue protein sequence, read N- to C-terminus: Serine hydroxymethyltransferase (417 aa).

(6S)-5,6,7,8-tetrahydrofolate is bound by residues Leu-121 and 125–127 (GHL). Lys-229 bears the N6-(pyridoxal phosphate)lysine mark. (6S)-5,6,7,8-tetrahydrofolate is bound at residue 355 to 357 (SPF).

The protein belongs to the SHMT family. In terms of assembly, homodimer. Pyridoxal 5'-phosphate serves as cofactor.

It localises to the cytoplasm. It catalyses the reaction (6R)-5,10-methylene-5,6,7,8-tetrahydrofolate + glycine + H2O = (6S)-5,6,7,8-tetrahydrofolate + L-serine. It functions in the pathway one-carbon metabolism; tetrahydrofolate interconversion. It participates in amino-acid biosynthesis; glycine biosynthesis; glycine from L-serine: step 1/1. Catalyzes the reversible interconversion of serine and glycine with tetrahydrofolate (THF) serving as the one-carbon carrier. This reaction serves as the major source of one-carbon groups required for the biosynthesis of purines, thymidylate, methionine, and other important biomolecules. Also exhibits THF-independent aldolase activity toward beta-hydroxyamino acids, producing glycine and aldehydes, via a retro-aldol mechanism. This chain is Serine hydroxymethyltransferase, found in Stenotrophomonas maltophilia (strain K279a).